We begin with the raw amino-acid sequence, 274 residues long: Tryptase beta-2 (274 aa).

The N-terminal stretch at 1 to 19 is a signal peptide; that stretch reads MLKLLLLLALSPLASLVHA. A propeptide spans 20–29 (activation peptide); the sequence is APCPVKQRVG. In terms of domain architecture, Peptidase S1 spans 30–271; that stretch reads IVGGREASES…YLDWIHRYVP (242 aa). Cys-58 and Cys-74 are disulfide-bonded. The active-site Charge relay system is the His-73. Tyr-96 carries the phosphotyrosine modification. N-linked (GlcNAc...) asparagine glycosylation occurs at Asn-104. The active-site Charge relay system is the Asp-120. Asn-131 carries N-linked (GlcNAc...) asparagine glycosylation. Disulfide bonds link Cys-154-Cys-229, Cys-187-Cys-210, and Cys-219-Cys-247. Catalysis depends on Ser-223, which acts as the Charge relay system.

Belongs to the peptidase S1 family. Tryptase subfamily. As to quaternary structure, homotetramer. The active tetramer is converted to inactive monomers at neutral and acidic pH in the absence of heparin. Low concentrations of inactive monomers become active monomers at pH 6.0 in the presence of heparin. When the concentration of active monomers is higher, they convert to active monomers and then to active tetramers. These monomers are active and functionally distinct from the tetrameric enzyme. In contrast to the hidden active sites in the tetrameric form, the active site of the monomeric form is accessible for macromolecular proteins and inhibitors, e.g. fibrinogen which is a substrate for the monomeric but not for the tetrameric form. The monomeric form forms a complex with SERPINB6.

Its subcellular location is the secreted. The enzyme catalyses Preferential cleavage: Arg-|-Xaa, Lys-|-Xaa, but with more restricted specificity than trypsin.. In terms of biological role, tryptase is the major neutral protease present in mast cells and is secreted upon the coupled activation-degranulation response of this cell type. Plays a role in innate immunity. In Rattus norvegicus (Rat), this protein is Tryptase beta-2 (Tpsb2).